The chain runs to 433 residues: Glutamate-1-semialdehyde 2,1-aminomutase (433 aa).

An N6-(pyridoxal phosphate)lysine modification is found at K273.

It belongs to the class-III pyridoxal-phosphate-dependent aminotransferase family. HemL subfamily. As to quaternary structure, homodimer. Requires pyridoxal 5'-phosphate as cofactor.

The protein localises to the cytoplasm. The enzyme catalyses (S)-4-amino-5-oxopentanoate = 5-aminolevulinate. It participates in porphyrin-containing compound metabolism; protoporphyrin-IX biosynthesis; 5-aminolevulinate from L-glutamyl-tRNA(Glu): step 2/2. Its pathway is porphyrin-containing compound metabolism; chlorophyll biosynthesis. The sequence is that of Glutamate-1-semialdehyde 2,1-aminomutase from Microcystis aeruginosa (strain NIES-843 / IAM M-2473).